The sequence spans 310 residues: GMP synthase [glutamine-hydrolyzing] subunit B (310 aa).

The 184-residue stretch at 2-185 folds into the GMPS ATP-PPase domain; sequence FDAKSFIEES…LGLPEKIAHR (184 aa). 29–35 provides a ligand contact to ATP; sequence SGGVDSS.

Heterodimer composed of a glutamine amidotransferase subunit (A) and a GMP-binding subunit (B).

The catalysed reaction is XMP + L-glutamine + ATP + H2O = GMP + L-glutamate + AMP + diphosphate + 2 H(+). It participates in purine metabolism; GMP biosynthesis; GMP from XMP (L-Gln route): step 1/1. In terms of biological role, catalyzes the synthesis of GMP from XMP. This is GMP synthase [glutamine-hydrolyzing] subunit B from Methanococcus vannielii (strain ATCC 35089 / DSM 1224 / JCM 13029 / OCM 148 / SB).